A 160-amino-acid polypeptide reads, in one-letter code: Small ribosomal subunit protein bS6 (160 aa).

The segment at 100–160 is disordered; sequence PSSVLARKSD…DDARETAGAE (61 aa). Composition is skewed to basic and acidic residues over residues 106 to 116 and 136 to 160; these read RKSDDRGDRGN and RSSE…AGAE.

The protein belongs to the bacterial ribosomal protein bS6 family.

Binds together with bS18 to 16S ribosomal RNA. This chain is Small ribosomal subunit protein bS6, found in Gluconobacter oxydans (strain 621H) (Gluconobacter suboxydans).